We begin with the raw amino-acid sequence, 659 residues long: Centrosomal protein of 76 kDa (659 aa).

A phosphoserine mark is found at S75 and S83.

It belongs to the CEP76 family. As to quaternary structure, interacts with CCP110 and CEP97.

The protein resides in the cytoplasm. The protein localises to the cytoskeleton. It is found in the microtubule organizing center. Its subcellular location is the centrosome. It localises to the centriole. Its function is as follows. Centrosomal protein involved in regulation of centriole duplication. Required to limit centriole duplication to once per cell cycle by preventing centriole reduplication. The chain is Centrosomal protein of 76 kDa (CEP76) from Homo sapiens (Human).